The following is a 271-amino-acid chain: Chymotrypsin-like elastase family member 2A (271 aa).

Residues 1–16 form the signal peptide; it reads MIRTLLLSALVAGALS. The propeptide at 17-30 is activation peptide; that stretch reads CGYPTYEVQHDVSR. The Peptidase S1 domain occupies 31-269; it reads VVGGQEASPN…YIDWINSVIA (239 aa). Cys-60 and Cys-76 are oxidised to a cystine. Residues His-75 and Asp-123 each act as charge relay system in the active site. Disulfide bonds link Cys-157-Cys-224, Cys-188-Cys-204, and Cys-214-Cys-245. Ser-218 (charge relay system) is an active-site residue.

Belongs to the peptidase S1 family. Elastase subfamily. In terms of assembly, interacts with CPA1. Interacts with SERPINA1. Pancreas.

It is found in the secreted. The enzyme catalyses Preferential cleavage: Leu-|-Xaa, Met-|-Xaa and Phe-|-Xaa. Hydrolyzes elastin.. Elastase that enhances insulin signaling and might have a physiologic role in cellular glucose metabolism. Circulates in plasma and reduces platelet hyperactivation, triggers both insulin secretion and degradation, and increases insulin sensitivity. The protein is Chymotrypsin-like elastase family member 2A (Cela2a) of Rattus norvegicus (Rat).